Consider the following 209-residue polypeptide: Uracil phosphoribosyltransferase (209 aa).

5-phospho-alpha-D-ribose 1-diphosphate is bound by residues arginine 79, arginine 104, and 131–139 (DPMLATGGS). Uracil-binding positions include isoleucine 194 and 199–201 (GDA). Position 200 (aspartate 200) interacts with 5-phospho-alpha-D-ribose 1-diphosphate.

It belongs to the UPRTase family. Requires Mg(2+) as cofactor.

It catalyses the reaction UMP + diphosphate = 5-phospho-alpha-D-ribose 1-diphosphate + uracil. It participates in pyrimidine metabolism; UMP biosynthesis via salvage pathway; UMP from uracil: step 1/1. With respect to regulation, allosterically activated by GTP. In terms of biological role, catalyzes the conversion of uracil and 5-phospho-alpha-D-ribose 1-diphosphate (PRPP) to UMP and diphosphate. This is Uracil phosphoribosyltransferase from Clostridium perfringens (strain ATCC 13124 / DSM 756 / JCM 1290 / NCIMB 6125 / NCTC 8237 / Type A).